Reading from the N-terminus, the 472-residue chain is MEEFQFIKYKGFDHVFKYSGPWLWWLVGFYLCLPILAYTLLPYLTMNGTISGKRKTVSIFVLGDLGHSPRMCYHAKSFSKLDYYVNLCGYLEEQPPFDIIDDINIDIYPITVTKNTSNLPFILFAAKKMVVQFFQLLKLLSDFRGTDYVLIQNPPSIPILLIVLAYIKVFSRKTKLIIDWHNLNYTILNLKFQNLKHPLVRILKTYERVLGQFADYNITVTRQMKEFLIKEFNFNKKKIITLHDRPGEQFKPLESLGVTKQEILESHDIFRDIQNISKYKILVSSTSFTPDEDFNLLLSALNQYDNSLAERGLPPILIIITGKGPLKSQFLQKVKQLNFSDNVIIKNAWLSSEDYPLILSVADLSISLHTSSSGIDLPMKIVDFFGCGIPVITLRFPAIGELVTHGTNGLITKSDKDSSVNESQEIYRLLTEAFKNDELLDKIKQGALKESNLRWEENWNNKMGKRFEYSTD.

Over 1–20 (MEEFQFIKYKGFDHVFKYSG) the chain is Lumenal. The chain crosses the membrane as a helical span at residues 21–41 (PWLWWLVGFYLCLPILAYTLL). At 42–118 (PYLTMNGTIS…PITVTKNTSN (77 aa)) the chain is on the cytoplasmic side. The segment at residues 119–139 (LPFILFAAKKMVVQFFQLLKL) is an intramembrane region (helical). At 140-472 (LSDFRGTDYV…MGKRFEYSTD (333 aa)) the chain is on the cytoplasmic side.

The protein belongs to the glycosyltransferase group 1 family.

The protein resides in the endoplasmic reticulum membrane. The catalysed reaction is an N,N'-diacetylchitobiosyl-diphospho-di-trans,poly-cis-dolichol + GDP-alpha-D-mannose = a beta-D-Man-(1-&gt;4)-beta-D-GlcNAc-(1-&gt;4)-alpha-D-GlcNAc-diphospho-di-trans,poly-cis-dolichol + GDP + H(+). It functions in the pathway protein modification; protein glycosylation. Participates in the formation of the lipid-linked precursor oligosaccharide for N-glycosylation. Involved in assembling the dolichol-pyrophosphate-GlcNAc(2)-Man(5) intermediate on the cytoplasmic surface of the ER. The protein is Chitobiosyldiphosphodolichol beta-mannosyltransferase (ALG1) of Debaryomyces hansenii (strain ATCC 36239 / CBS 767 / BCRC 21394 / JCM 1990 / NBRC 0083 / IGC 2968) (Yeast).